A 357-amino-acid polypeptide reads, in one-letter code: MRKKIGILTSGGDCPGLNCVIRAVVSHATLTYDWEVFGIPYATQGLLERQAIALNMHGWDLRGIDPLLNMGGTILGTINKGDTLAHVDEMLASYEALALDALIVIGGDGSLGILHELASRGNWNLVAIPKTIDSDVALTERAVGFDTAVNTIVDALNRLTFTAASHDRVMIVEVMGRSAGHLALHAGIAGGADVILIPEISYTISGLCQYIAELRDRWQRKFAIVVVAEGAKLCLEDVQENIASACVSPKCGRGQYIAEQIARCSKNLIDTRVSVLGHIQRGGIPSALDRLTATVFGKTAVDLVAQGKFGQMVAWQNGEAIPVPIQDVVAQSPLHVNPQGSLVQSARCLGIYVGEKT.

ATP-binding positions include G12, 80-81, and 107-110; these read KG and GDGS. D108 provides a ligand contact to Mg(2+). Substrate-binding positions include 131-133, R168, 175-177, E229, R272, and 278-281; these read TID, MGR, and HIQR. D133 acts as the Proton acceptor in catalysis.

Belongs to the phosphofructokinase type A (PFKA) family. Mixed-substrate PFK group III subfamily. As to quaternary structure, homodimer or homotetramer. The cofactor is Mg(2+).

It localises to the cytoplasm. The enzyme catalyses beta-D-fructose 6-phosphate + ATP = beta-D-fructose 1,6-bisphosphate + ADP + H(+). The protein operates within carbohydrate degradation; glycolysis; D-glyceraldehyde 3-phosphate and glycerone phosphate from D-glucose: step 3/4. Its activity is regulated as follows. Subject to allosteric activation by ADP and other diphosphonucleosides, and inhibition by phosphoenolpyruvate. Catalyzes the phosphorylation of D-fructose 6-phosphate to fructose 1,6-bisphosphate by ATP, the first committing step of glycolysis. The polypeptide is ATP-dependent 6-phosphofructokinase (Trichormus variabilis (strain ATCC 29413 / PCC 7937) (Anabaena variabilis)).